The primary structure comprises 481 residues: Membrane-bound lytic murein transglycosylase F (481 aa).

A signal peptide spans 1–21; sequence MKPLKLNYFFIGIITLLLALA. The non-LT domain stretch occupies residues 22–268; the sequence is LWPSIPWRSS…RLEEKYLGHV (247 aa). Residues 269–481 form an LT domain region; it reads GEFDYVDTTT…PAVPLTKVPE (213 aa). Glu313 is a catalytic residue.

The protein in the N-terminal section; belongs to the bacterial solute-binding protein 3 family. In the C-terminal section; belongs to the transglycosylase Slt family.

It localises to the cell outer membrane. The catalysed reaction is Exolytic cleavage of the (1-&gt;4)-beta-glycosidic linkage between N-acetylmuramic acid (MurNAc) and N-acetylglucosamine (GlcNAc) residues in peptidoglycan, from either the reducing or the non-reducing ends of the peptidoglycan chains, with concomitant formation of a 1,6-anhydrobond in the MurNAc residue.. Its function is as follows. Murein-degrading enzyme that degrades murein glycan strands and insoluble, high-molecular weight murein sacculi, with the concomitant formation of a 1,6-anhydromuramoyl product. Lytic transglycosylases (LTs) play an integral role in the metabolism of the peptidoglycan (PG) sacculus. Their lytic action creates space within the PG sacculus to allow for its expansion as well as for the insertion of various structures such as secretion systems and flagella. The chain is Membrane-bound lytic murein transglycosylase F from Pectobacterium atrosepticum (strain SCRI 1043 / ATCC BAA-672) (Erwinia carotovora subsp. atroseptica).